Here is a 596-residue protein sequence, read N- to C-terminus: Aspartate--tRNA(Asp/Asn) ligase (596 aa).

Glutamate 175 contributes to the L-aspartate binding site. The tract at residues 199–202 (QQYK) is aspartate. The L-aspartate site is built by arginine 221 and histidine 454. An ATP-binding site is contributed by 221 to 223 (RDE). Residue glutamate 488 coordinates ATP. An L-aspartate-binding site is contributed by arginine 495. Position 540-543 (540-543 (GIDR)) interacts with ATP.

This sequence belongs to the class-II aminoacyl-tRNA synthetase family. Type 1 subfamily. In terms of assembly, homodimer.

It is found in the cytoplasm. It carries out the reaction tRNA(Asx) + L-aspartate + ATP = L-aspartyl-tRNA(Asx) + AMP + diphosphate. Aspartyl-tRNA synthetase with relaxed tRNA specificity since it is able to aspartylate not only its cognate tRNA(Asp) but also tRNA(Asn). Reaction proceeds in two steps: L-aspartate is first activated by ATP to form Asp-AMP and then transferred to the acceptor end of tRNA(Asp/Asn). This chain is Aspartate--tRNA(Asp/Asn) ligase, found in Rhizobium johnstonii (strain DSM 114642 / LMG 32736 / 3841) (Rhizobium leguminosarum bv. viciae).